A 490-amino-acid polypeptide reads, in one-letter code: GDP-fucose protein O-fucosyltransferase 2 (490 aa).

Positions 1-25 (MRGSWPRLGFPALLLLLHLLTGSDA) are cleaved as a signal peptide. Residues asparagine 29 and asparagine 79 are each glycosylated (N-linked (GlcNAc...) asparagine). 81–85 (SEGFN) is a GDP-beta-L-fucose binding site. The Proton acceptor role is filled by glutamate 82. Residues cysteine 203 and cysteine 226 are joined by a disulfide bond. 336–338 (HLR) serves as a coordination point for GDP-beta-L-fucose. Residue asparagine 368 is glycosylated (N-linked (GlcNAc...) asparagine). GDP-beta-L-fucose contacts are provided by residues aspartate 418 and 435–436 (TF). Cysteine 459 and cysteine 466 are joined by a disulfide.

The protein belongs to the glycosyltransferase 68 family.

The protein resides in the endoplasmic reticulum. Its subcellular location is the golgi apparatus. The catalysed reaction is L-seryl-[protein] + GDP-beta-L-fucose = 3-O-(alpha-L-fucosyl)-L-seryl-[protein] + GDP + H(+). It catalyses the reaction L-threonyl-[protein] + GDP-beta-L-fucose = 3-O-(alpha-L-fucosyl)-L-threonyl-[protein] + GDP + H(+). It functions in the pathway protein modification; protein glycosylation. Its activity is regulated as follows. Does not require divalent metal ions for optimal activity. In terms of biological role, catalyzes the reaction that attaches fucose through an O-glycosidic linkage to a conserved serine or threonine residue in the consensus sequence C1-X-X-S/T-C2 of thrombospondin type I repeats (TSRs) where C1 and C2 are the first and second cysteines of the repeat, respectively. O-fucosylates members of several protein families including the ADAMTS, the thrombospondin (TSP) and spondin families. This chain is GDP-fucose protein O-fucosyltransferase 2, found in Drosophila melanogaster (Fruit fly).